Reading from the N-terminus, the 172-residue chain is 3-hydroxydecanoyl-[acyl-carrier-protein] dehydratase (172 aa).

His71 is an active-site residue.

It belongs to the thioester dehydratase family. FabA subfamily. Homodimer.

The protein localises to the cytoplasm. The enzyme catalyses a (3R)-hydroxyacyl-[ACP] = a (2E)-enoyl-[ACP] + H2O. It carries out the reaction (3R)-hydroxydecanoyl-[ACP] = (2E)-decenoyl-[ACP] + H2O. The catalysed reaction is (2E)-decenoyl-[ACP] = (3Z)-decenoyl-[ACP]. It participates in lipid metabolism; fatty acid biosynthesis. In terms of biological role, necessary for the introduction of cis unsaturation into fatty acids. Catalyzes the dehydration of (3R)-3-hydroxydecanoyl-ACP to E-(2)-decenoyl-ACP and then its isomerization to Z-(3)-decenoyl-ACP. Can catalyze the dehydratase reaction for beta-hydroxyacyl-ACPs with saturated chain lengths up to 16:0, being most active on intermediate chain length. The sequence is that of 3-hydroxydecanoyl-[acyl-carrier-protein] dehydratase from Pectobacterium carotovorum subsp. carotovorum (strain PC1).